The sequence spans 751 residues: Myb-related protein A (751 aa).

Residues 1–22 (MAKRSRSEDEDDDLQYADHDYE) are disordered. HTH myb-type domains lie at 30-81 (KKLW…QKVL), 82-137 (NPEL…NPEV), and 138-188 (KKSS…RRKV). 3 DNA-binding regions (H-T-H motif) span residues 58–81 (WTLIASHLQNRSDFQCQHRWQKVL), 110–133 (WSLIAKHLKGRIGKQCRERWHNHL), and 161–184 (WAEIAKLLPGRTDNSIKNHWNSTM). K199 is covalently cross-linked (Glycyl lysine isopeptide (Lys-Gly) (interchain with G-Cter in SUMO2)). Residues 230 to 294 (IPGYQYVSPD…RLPPQPGSFS (65 aa)) are transcriptional activation domain. Residues 297-552 (SGSFLMDDSM…IRRSILGTTP (256 aa)) form a negative regulatory domain region. The residue at position 393 (K393) is an N6-acetyllysine. Residues K591 and K601 each participate in a glycyl lysine isopeptide (Lys-Gly) (interchain with G-Cter in SUMO2) cross-link.

In terms of assembly, component of the DREAM complex (also named LINC complex) at least composed of E2F4, E2F5, LIN9, LIN37, LIN52, LIN54, MYBL1, MYBL2, RBL1, RBL2, RBBP4, TFDP1 and TFDP2. The complex exists in quiescent cells where it represses cell cycle-dependent genes. It dissociates in S phase when LIN9, LIN37, LIN52 and LIN54 form a subcomplex that binds to MYBL2. As to expression, predominantly in the testis. Very low levels in the ovaries, spleen and brain.

It is found in the nucleus. Functionally, transcription factor that specifically recognizes the sequence 5'-YAAC[GT]G-3'. Acts as a master regulator of male meiosis by promoting expression of piRNAs: activates expression of both piRNA precursor RNAs and expression of protein-coding genes involved in piRNA metabolism, such as PIWIL1. The piRNA metabolic process mediates the repression of transposable elements during meiosis by forming complexes composed of piRNAs and Piwi proteins and governs the methylation and subsequent repression of transposons, which is essential for the germline integrity. Transcriptional activator of SOX30. In Mus musculus (Mouse), this protein is Myb-related protein A (Mybl1).